The sequence spans 347 residues: NADH-ubiquinone oxidoreductase chain 2 (347 aa).

11 helical membrane passes run 2 to 22, 26 to 46, 60 to 80, 94 to 114, 127 to 147, 151 to 171, 179 to 197, 201 to 223, 242 to 262, 274 to 294, and 325 to 345; these read LSPLIQSTLLMTLGLGTLVTF, SWILAWIGLEINTIAIIPLMA, YFIAQSAGSATLLVTACLAAW, IILNAMTLALMFKLGMAPMHF, TGMILATWQKLAPITLLIQIA, NNAFILGPALLSVFVGGWGGL, IIAYSSIAHMGWIASMAPF, ITWVTTLIYCLLTSTTFINLNTL, MLLLLLLLSLGGLPPLTGFTN, NLVIYLFMMMMGSLLSLFFYT, and LMTMLSINLFILTPQLMAIFI.

This sequence belongs to the complex I subunit 2 family.

Its subcellular location is the mitochondrion inner membrane. The enzyme catalyses a ubiquinone + NADH + 5 H(+)(in) = a ubiquinol + NAD(+) + 4 H(+)(out). In terms of biological role, core subunit of the mitochondrial membrane respiratory chain NADH dehydrogenase (Complex I) that is believed to belong to the minimal assembly required for catalysis. Complex I functions in the transfer of electrons from NADH to the respiratory chain. The immediate electron acceptor for the enzyme is believed to be ubiquinone. This chain is NADH-ubiquinone oxidoreductase chain 2 (MT-ND2), found in Lampetra fluviatilis (European river lamprey).